We begin with the raw amino-acid sequence, 165 residues long: Small ribosomal subunit protein uS5 (165 aa).

An S5 DRBM domain is found at 13 to 76; sequence LEEKVLVVNR…EAAKKNLMKI (64 aa).

The protein belongs to the universal ribosomal protein uS5 family. Part of the 30S ribosomal subunit. Contacts proteins S4 and S8.

Its function is as follows. With S4 and S12 plays an important role in translational accuracy. In terms of biological role, located at the back of the 30S subunit body where it stabilizes the conformation of the head with respect to the body. The protein is Small ribosomal subunit protein uS5 of Chlamydia pneumoniae (Chlamydophila pneumoniae).